Here is a 235-residue protein sequence, read N- to C-terminus: Serine protease SplA (235 aa).

The signal sequence occupies residues 1–35; sequence MNKNVMIKGLTALTILTSLGFAENISDQPHSIAKA. Residues histidine 74, aspartate 113, and serine 189 each act as charge relay system in the active site.

The protein belongs to the peptidase S1B family.

Its subcellular location is the secreted. The protein is Serine protease SplA (splA) of Staphylococcus aureus.